Consider the following 147-residue polypeptide: Large ribosomal subunit protein bL21 (147 aa).

Residues 125-147 (EEVEAAPKAKKAAPKAKKEATKE) are disordered.

This sequence belongs to the bacterial ribosomal protein bL21 family. In terms of assembly, part of the 50S ribosomal subunit. Contacts protein L20.

Functionally, this protein binds to 23S rRNA in the presence of protein L20. This Flavobacterium johnsoniae (strain ATCC 17061 / DSM 2064 / JCM 8514 / BCRC 14874 / CCUG 350202 / NBRC 14942 / NCIMB 11054 / UW101) (Cytophaga johnsonae) protein is Large ribosomal subunit protein bL21.